The sequence spans 394 residues: Elongation factor Tu (394 aa).

Residues 10-204 (KPHINVGTIG…FLDSYIPEPK (195 aa)) enclose the tr-type G domain. The interval 19-26 (GHVDHGKT) is G1. 19 to 26 (GHVDHGKT) lines the GTP pocket. Mg(2+) is bound at residue Thr-26. Residues 60–64 (GITIN) are G2. The interval 81–84 (DCPG) is G3. GTP is bound by residues 81–85 (DCPGH) and 136–139 (NKCD). The segment at 136–139 (NKCD) is G4. The tract at residues 174 to 176 (SAL) is G5.

Belongs to the TRAFAC class translation factor GTPase superfamily. Classic translation factor GTPase family. EF-Tu/EF-1A subfamily. In terms of assembly, monomer.

It is found in the cytoplasm. It carries out the reaction GTP + H2O = GDP + phosphate + H(+). In terms of biological role, GTP hydrolase that promotes the GTP-dependent binding of aminoacyl-tRNA to the A-site of ribosomes during protein biosynthesis. In Buchnera aphidicola subsp. Acyrthosiphon pisum (strain 5A), this protein is Elongation factor Tu.